A 141-amino-acid chain; its full sequence is Large ribosomal subunit protein uL11 (141 aa).

This sequence belongs to the universal ribosomal protein uL11 family. As to quaternary structure, part of the ribosomal stalk of the 50S ribosomal subunit. Interacts with L10 and the large rRNA to form the base of the stalk. L10 forms an elongated spine to which L12 dimers bind in a sequential fashion forming a multimeric L10(L12)X complex. Post-translationally, one or more lysine residues are methylated.

Forms part of the ribosomal stalk which helps the ribosome interact with GTP-bound translation factors. The chain is Large ribosomal subunit protein uL11 from Thermotoga neapolitana (strain ATCC 49049 / DSM 4359 / NBRC 107923 / NS-E).